The primary structure comprises 317 residues: Melanocyte-stimulating hormone receptor (317 aa).

The Extracellular segment spans residues 1-37 (MPAQGSQRSXLGSLNSTLMATPSLGLAANQSGPQCLE). 2 N-linked (GlcNAc...) asparagine glycosylation sites follow: N15 and N29. Residues 38–63 (VSVPDGLFLCLGLVSLVENMLVVAAI) traverse the membrane as a helical segment. The Cytoplasmic portion of the chain corresponds to 64 to 72 (AKNRNLHSP). A helical membrane pass occupies residues 73-93 (MYCFICCLALSDLLVSISNVL). Over 94–118 (ETAVMLLLEAGALAVGATVVQQLDN) the chain is Extracellular. The helical transmembrane segment at 119 to 140 (VIDVLICSSMVSSLCFLGAIAM) threads the bilayer. The Cytoplasmic segment spans residues 141 to 163 (DRYISIFYALRYHSIVTLSRAQW). The chain crosses the membrane as a helical span at residues 164–183 (ATAAVWAASILSSTLFIAYY). The Extracellular segment spans residues 184–191 (DRTVVLLC). Residues 192 to 211 (LVVFFLAMLVLMAVLYAHML) traverse the membrane as a helical segment. Over 212–240 (TQACQHVQGITRLHKRQHLVQQGFGLKGA) the chain is Cytoplasmic. A helical transmembrane segment spans residues 241–266 (ATLTILLGVFLLCWGPFFLHLTLIAV). The Extracellular portion of the chain corresponds to 267-279 (CPQHPTCSCVFKN). Residues 280–300 (FKLFLALIICNAIVDPLIYAF) form a helical membrane-spanning segment. Residues 301-317 (RSQELRKTLKEVLLFSW) are Cytoplasmic-facing.

Belongs to the G-protein coupled receptor 1 family. As to quaternary structure, interacts with MGRN1, but does not undergo MGRN1-mediated ubiquitination; this interaction competes with GNAS-binding and thus inhibits agonist-induced cAMP production. Interacts with OPN3; the interaction results in a decrease in MC1R-mediated cAMP signaling and ultimately a decrease in melanin production in melanocytes.

It localises to the cell membrane. Functionally, receptor for MSH (alpha, beta and gamma) and ACTH. The activity of this receptor is mediated by G proteins which activate adenylate cyclase. Mediates melanogenesis, the production of eumelanin (black/brown) and phaeomelanin (red/yellow), via regulation of cAMP signaling in melanocytes. In Galago senegalensis (Northern lesser bushbaby), this protein is Melanocyte-stimulating hormone receptor (MC1R).